Reading from the N-terminus, the 338-residue chain is 4-hydroxythreonine-4-phosphate dehydrogenase (338 aa).

Positions 136 and 137 each coordinate substrate. Positions 173, 218, and 273 each coordinate a divalent metal cation. Substrate-binding residues include K281, N290, and R299.

Belongs to the PdxA family. Homodimer. It depends on Zn(2+) as a cofactor. Mg(2+) serves as cofactor. Co(2+) is required as a cofactor.

The protein resides in the cytoplasm. The enzyme catalyses 4-(phosphooxy)-L-threonine + NAD(+) = 3-amino-2-oxopropyl phosphate + CO2 + NADH. The protein operates within cofactor biosynthesis; pyridoxine 5'-phosphate biosynthesis; pyridoxine 5'-phosphate from D-erythrose 4-phosphate: step 4/5. In terms of biological role, catalyzes the NAD(P)-dependent oxidation of 4-(phosphooxy)-L-threonine (HTP) into 2-amino-3-oxo-4-(phosphooxy)butyric acid which spontaneously decarboxylates to form 3-amino-2-oxopropyl phosphate (AHAP). The sequence is that of 4-hydroxythreonine-4-phosphate dehydrogenase from Ralstonia nicotianae (strain ATCC BAA-1114 / GMI1000) (Ralstonia solanacearum).